The sequence spans 188 residues: MEERNEQVVEEVKEAQVEEAVTPENSEETVEEKSEAALLQEKVDELQAKLTETEGRTLRLQADFENYKRRVQMDKQAAEKYRAQSLVSDILPALDNFERAMQVEATDEQTKSLLQGMEMVHRQLLEALTKEGVEVIEAVGKQFDPNEHQAIMQVEDSEFESNAVVEEFQKGYKLKDRVIRPSMVKVNQ.

Positions 1 to 16 (MEERNEQVVEEVKEAQ) are enriched in basic and acidic residues. Residues 1–31 (MEERNEQVVEEVKEAQVEEAVTPENSEETVE) are disordered.

Belongs to the GrpE family. In terms of assembly, homodimer.

The protein resides in the cytoplasm. In terms of biological role, participates actively in the response to hyperosmotic and heat shock by preventing the aggregation of stress-denatured proteins, in association with DnaK and GrpE. It is the nucleotide exchange factor for DnaK and may function as a thermosensor. Unfolded proteins bind initially to DnaJ; upon interaction with the DnaJ-bound protein, DnaK hydrolyzes its bound ATP, resulting in the formation of a stable complex. GrpE releases ADP from DnaK; ATP binding to DnaK triggers the release of the substrate protein, thus completing the reaction cycle. Several rounds of ATP-dependent interactions between DnaJ, DnaK and GrpE are required for fully efficient folding. This Bacillus cereus (strain G9842) protein is Protein GrpE.